A 70-amino-acid chain; its full sequence is MSILISNKQFNHGLKDEFATKKDLELLEERILRYVDNKFNQLDKKIDRTFYLLVFFIILWVSREAFFYLI.

The helical transmembrane segment at 50–70 (FYLLVFFIILWVSREAFFYLI) threads the bilayer.

This sequence belongs to the M.jannaschii MJ0023/MJ0349/MJ1072/MJ1074/MJ1107/MJECL16 family.

It localises to the membrane. This is an uncharacterized protein from Methanocaldococcus jannaschii (strain ATCC 43067 / DSM 2661 / JAL-1 / JCM 10045 / NBRC 100440) (Methanococcus jannaschii).